The primary structure comprises 253 residues: tRNA (guanine-N(1)-)-methyltransferase (253 aa).

S-adenosyl-L-methionine is bound by residues G116 and 136 to 141 (VGDYIL).

It belongs to the RNA methyltransferase TrmD family. Homodimer.

It localises to the cytoplasm. It carries out the reaction guanosine(37) in tRNA + S-adenosyl-L-methionine = N(1)-methylguanosine(37) in tRNA + S-adenosyl-L-homocysteine + H(+). Its function is as follows. Specifically methylates guanosine-37 in various tRNAs. This chain is tRNA (guanine-N(1)-)-methyltransferase, found in Colwellia psychrerythraea (strain 34H / ATCC BAA-681) (Vibrio psychroerythus).